We begin with the raw amino-acid sequence, 1083 residues long: Ubiquitin-protein ligase E3C (1083 aa).

2 stretches are compositionally biased toward basic and acidic residues: residues 1–10 (MFSFEGDFKT) and 20–40 (SRKE…RKRE). The segment at 1 to 40 (MFSFEGDFKTRPKVSLGGASRKEEKASLLHRTQEERRKRE) is disordered. Residues 1-60 (MFSFEGDFKTRPKVSLGGASRKEEKASLLHRTQEERRKREEERRRLKNAIIIQSFIRGYR) form a cis-determinant of acceptor ubiquitin-binding region. The 30-residue stretch at 45–74 (RLKNAIIIQSFIRGYRDRKQQYSIQRSAFD) folds into the IQ domain. The tract at residues 355–385 (SPASASCHDSASDSEEESEEADKPSSPEDGR) is disordered. Over residues 375–385 (ADKPSSPEDGR) the composition is skewed to basic and acidic residues. Positions 744–1083 (NEPDLKKRIR…IECAAGFELS (340 aa)) constitute an HECT domain. Lys-903 participates in a covalent cross-link: Glycyl lysine isopeptide (Lys-Gly) (interchain with G-Cter in ubiquitin); by autocatalysis. The active-site Glycyl thioester intermediate is the Cys-1051.

Belongs to the UBE3C family. In terms of assembly, interacts with 26S proteasomes. Interacts (via the HECT domain) with UBE2D1 and, less efficiently, with UBE2L3. In terms of processing, autoubiquitinated; promoting its own degradation. Highly expressed in skeletal muscle. Detected at much lower levels in kidney and pancreas.

It carries out the reaction S-ubiquitinyl-[E2 ubiquitin-conjugating enzyme]-L-cysteine + [acceptor protein]-L-lysine = [E2 ubiquitin-conjugating enzyme]-L-cysteine + N(6)-ubiquitinyl-[acceptor protein]-L-lysine.. The protein operates within protein modification; protein ubiquitination. E3 ubiquitin-protein ligase that specifically catalyzes 'Lys-29'- and 'Lys-48'-linked polyubiquitin chains. Accepts ubiquitin from the E2 ubiquitin-conjugating enzyme UBE2D1 in the form of a thioester and then directly transfers the ubiquitin to targeted substrates. Associates with the proteasome and promotes elongation of ubiquitin chains on substrates bound to the 26S proteasome. Also catalyzes 'Lys-29'- and 'Lys-48'-linked ubiquitination of 26S proteasome subunit ADRM1/RPN13 in response to proteotoxic stress, impairing the ability of the proteasome to bind and degrade ubiquitin-conjugated proteins. Acts as a negative regulator of autophagy by mediating 'Lys-29'- and 'Lys-48'-linked ubiquitination of PIK3C3/VPS34, promoting its degradation. Can assemble unanchored poly-ubiquitin chains in either 'Lys-29'- or 'Lys-48'-linked polyubiquitin chains; with some preference for 'Lys-48' linkages. Acts as a negative regulator of type I interferon by mediating 'Lys-48'-linked ubiquitination of IRF3 and IRF7, leading to their degradation by the proteasome. Catalyzes ubiquitination and degradation of CAND2. This Homo sapiens (Human) protein is Ubiquitin-protein ligase E3C.